The chain runs to 223 residues: Protein-disulfide oxidoreductase DsbI (223 aa).

A helical transmembrane segment spans residues 26-46; sequence LLWLLMAVAMGALIILAHSFF. Cysteines 55 and 58 form a disulfide. Transmembrane regions (helical) follow at residues 59–78 and 82–102; these read VYIR…AAIN and IILK…GLKF. An intrachain disulfide couples Cys127 to Cys153. A helical membrane pass occupies residues 198 to 218; it reads CMLAFGMCLVLLVIMSGAWAL.

It belongs to the DsbB family. DsbI subfamily. As to quaternary structure, interacts with DsbL.

The protein resides in the cell inner membrane. Required for disulfide bond formation in some proteins. Part of a redox system composed of DsbI and DsbL that mediates formation of an essential disulfide bond in AssT. The sequence is that of Protein-disulfide oxidoreductase DsbI from Escherichia coli O1:K1 / APEC.